Here is a 249-residue protein sequence, read N- to C-terminus: Triosephosphate isomerase (249 aa).

9–11 contacts substrate; the sequence is NWK. H94 acts as the Electrophile in catalysis. Residue E166 is the Proton acceptor of the active site. Residues G172, S214, and 235–236 contribute to the substrate site; that span reads GG.

This sequence belongs to the triosephosphate isomerase family. As to quaternary structure, homodimer.

Its subcellular location is the cytoplasm. The catalysed reaction is D-glyceraldehyde 3-phosphate = dihydroxyacetone phosphate. It functions in the pathway carbohydrate biosynthesis; gluconeogenesis. The protein operates within carbohydrate degradation; glycolysis; D-glyceraldehyde 3-phosphate from glycerone phosphate: step 1/1. Functionally, involved in the gluconeogenesis. Catalyzes stereospecifically the conversion of dihydroxyacetone phosphate (DHAP) to D-glyceraldehyde-3-phosphate (G3P). In Leptospira biflexa serovar Patoc (strain Patoc 1 / Ames), this protein is Triosephosphate isomerase.